Reading from the N-terminus, the 281-residue chain is Large ribosomal subunit protein uL2 (281 aa).

The disordered stretch occupies residues 208–281 (AGRSRYAGQR…RGRKRGPHTR (74 aa)). Residues 254 to 281 (TVGKKTRSHKARSNKFIVRGRKRGPHTR) show a composition bias toward basic residues.

This sequence belongs to the universal ribosomal protein uL2 family. As to quaternary structure, part of the 50S ribosomal subunit. Forms a bridge to the 30S subunit in the 70S ribosome.

One of the primary rRNA binding proteins. Required for association of the 30S and 50S subunits to form the 70S ribosome, for tRNA binding and peptide bond formation. It has been suggested to have peptidyltransferase activity; this is somewhat controversial. Makes several contacts with the 16S rRNA in the 70S ribosome. This is Large ribosomal subunit protein uL2 from Limosilactobacillus fermentum (strain NBRC 3956 / LMG 18251) (Lactobacillus fermentum).